The chain runs to 246 residues: O-antigen export system ATP-binding protein RfbB (246 aa).

The ABC transporter domain maps to 22-246 (SGIKDLVFHP…IIELYKQAMA (225 aa)). 63–70 (GRNGAGKS) lines the ATP pocket.

It belongs to the ABC transporter superfamily.

The protein localises to the cell inner membrane. Its function is as follows. May form an ATP-driven O-antigen export apparatus, in association with RfbA. This is O-antigen export system ATP-binding protein RfbB (rfbB) from Klebsiella pneumoniae.